The primary structure comprises 690 residues: Elongation factor G (690 aa).

The tr-type G domain maps to 8–283; that stretch reads SRCRNIGIMA…AVVDFLPSPS (276 aa). Residues 17–24, 81–85, and 135–138 contribute to the GTP site; these read AHIDAGKT, DTPGH, and NKMD.

Belongs to the TRAFAC class translation factor GTPase superfamily. Classic translation factor GTPase family. EF-G/EF-2 subfamily.

It is found in the cytoplasm. In terms of biological role, catalyzes the GTP-dependent ribosomal translocation step during translation elongation. During this step, the ribosome changes from the pre-translocational (PRE) to the post-translocational (POST) state as the newly formed A-site-bound peptidyl-tRNA and P-site-bound deacylated tRNA move to the P and E sites, respectively. Catalyzes the coordinated movement of the two tRNA molecules, the mRNA and conformational changes in the ribosome. In Anaplasma marginale (strain Florida), this protein is Elongation factor G.